A 431-amino-acid polypeptide reads, in one-letter code: Gamma-glutamyl phosphate reductase (431 aa).

The protein belongs to the gamma-glutamyl phosphate reductase family.

It is found in the cytoplasm. The enzyme catalyses L-glutamate 5-semialdehyde + phosphate + NADP(+) = L-glutamyl 5-phosphate + NADPH + H(+). It functions in the pathway amino-acid biosynthesis; L-proline biosynthesis; L-glutamate 5-semialdehyde from L-glutamate: step 2/2. Its function is as follows. Catalyzes the NADPH-dependent reduction of L-glutamate 5-phosphate into L-glutamate 5-semialdehyde and phosphate. The product spontaneously undergoes cyclization to form 1-pyrroline-5-carboxylate. The sequence is that of Gamma-glutamyl phosphate reductase from Synechococcus elongatus (strain ATCC 33912 / PCC 7942 / FACHB-805) (Anacystis nidulans R2).